The following is a 28-amino-acid chain: Arylalkyl acylamidase (28 aa).

As to quaternary structure, homotetramer.

It carries out the reaction an N-acetylarylalkylamine + H2O = an aralkylamine + acetate. With respect to regulation, activated by divalent metal ions. Inhibited by certain thiol reagents. In terms of biological role, shows a strict specificity for N-acetyl arylalkylamines but not acetanilide derivatives. This Pseudomonas putida (Arthrobacter siderocapsulatus) protein is Arylalkyl acylamidase.